Here is a 232-residue protein sequence, read N- to C-terminus: RNA chaperone ProQ (232 aa).

The interval 105 to 182 is disordered; that stretch reads EAKARVQAQR…REEQHTPVSD (78 aa). Over residues 117-136 the composition is skewed to basic and acidic residues; it reads QQAKKREAAAAAGEKEDAPR. Positions 137 to 146 are enriched in basic residues; sequence RERKPRPTTP. Positions 147–177 are enriched in basic and acidic residues; sequence RRKEGAERKPRAQKPVEKAPKTVKAPREEQH.

It belongs to the ProQ family.

The protein localises to the cytoplasm. In terms of biological role, RNA chaperone with significant RNA binding, RNA strand exchange and RNA duplexing activities. May regulate ProP activity through an RNA-based, post-transcriptional mechanism. The chain is RNA chaperone ProQ from Shigella flexneri serotype 5b (strain 8401).